Here is a 232-residue protein sequence, read N- to C-terminus: Large ribosomal subunit protein uL1 (232 aa).

The protein belongs to the universal ribosomal protein uL1 family. In terms of assembly, part of the 50S ribosomal subunit.

Binds directly to 23S rRNA. The L1 stalk is quite mobile in the ribosome, and is involved in E site tRNA release. Its function is as follows. Protein L1 is also a translational repressor protein, it controls the translation of the L11 operon by binding to its mRNA. This chain is Large ribosomal subunit protein uL1, found in Bordetella bronchiseptica (strain ATCC BAA-588 / NCTC 13252 / RB50) (Alcaligenes bronchisepticus).